A 92-amino-acid chain; its full sequence is Large ribosomal subunit protein bL25 (92 aa).

This sequence belongs to the bacterial ribosomal protein bL25 family. In terms of assembly, part of the 50S ribosomal subunit; part of the 5S rRNA/L5/L18/L25 subcomplex. Contacts the 5S rRNA. Binds to the 5S rRNA independently of L5 and L18.

Functionally, this is one of the proteins that binds to the 5S RNA in the ribosome where it forms part of the central protuberance. The sequence is that of Large ribosomal subunit protein bL25 from Vibrio cholerae serotype O1 (strain ATCC 39541 / Classical Ogawa 395 / O395).